A 250-amino-acid chain; its full sequence is Proteasome subunit alpha type-7-like (250 aa).

Residue S132 is glycosylated (O-linked (GlcNAc) serine).

This sequence belongs to the peptidase T1A family. The 26S proteasome consists of a 20S proteasome core and two 19S regulatory subunits. The 20S proteasome core is a barrel-shaped complex made of 28 subunits that are arranged in four stacked rings. The two outer rings are each formed by seven alpha subunits, and the two inner rings are formed by seven beta subunits. The proteolytic activity is exerted by three beta-subunits PSMB5, PSMB6 and PSMB7. PSMA7 interacts directly with the PSMG1-PSMG2 heterodimer which promotes 20S proteasome assembly. Interacts with HIF1A. Interacts with RAB7A. Interacts with PRKN. Interacts with ABL1 and ABL2. Interacts with EMAP2. Interacts with MAVS.

The protein localises to the cytoplasm. Its subcellular location is the nucleus. In terms of biological role, component of the 20S core proteasome complex involved in the proteolytic degradation of most intracellular proteins. This complex plays numerous essential roles within the cell by associating with different regulatory particles. Associated with two 19S regulatory particles, forms the 26S proteasome and thus participates in the ATP-dependent degradation of ubiquitinated proteins. The 26S proteasome plays a key role in the maintenance of protein homeostasis by removing misfolded or damaged proteins that could impair cellular functions, and by removing proteins whose functions are no longer required. Associated with the PA200 or PA28, the 20S proteasome mediates ubiquitin-independent protein degradation. This type of proteolysis is required in several pathways including spermatogenesis (20S-PA200 complex) or generation of a subset of MHC class I-presented antigenic peptides (20S-PA28 complex). Inhibits the transactivation function of HIF-1A under both normoxic and hypoxia-mimicking conditions. The interaction with EMAP2 increases the proteasome-mediated HIF-1A degradation under the hypoxic conditions. Plays a role in hepatitis C virus internal ribosome entry site-mediated translation. Mediates nuclear translocation of the androgen receptor (AR) and thereby enhances androgen-mediated transactivation. Promotes MAVS degradation and thereby negatively regulates MAVS-mediated innate immune response. The chain is Proteasome subunit alpha type-7-like (PSMA7L) from Macaca fascicularis (Crab-eating macaque).